We begin with the raw amino-acid sequence, 555 residues long: 6-phosphofructo-2-kinase/fructose-2,6-bisphosphatase 3 (555 aa).

Residues M1–Q245 are 6-phosphofructo-2-kinase. ATP is bound at residue G42–Y50. Positions 75 and 99 each coordinate beta-D-fructose 6-phosphate. D125 is an active-site residue. Beta-D-fructose 6-phosphate contacts are provided by T127 and R133. C155 is an active-site residue. An ATP-binding site is contributed by N164–K169. Beta-D-fructose 6-phosphate contacts are provided by K169, R190, and Y194. The fructose-2,6-bisphosphatase stretch occupies residues P246 to Y555. R253 provides a ligand contact to beta-D-fructose 2,6-bisphosphate. The active-site Tele-phosphohistidine intermediate is the H254. Residues N260 and G266 each coordinate beta-D-fructose 2,6-bisphosphate. E323 functions as the Proton donor/acceptor in the catalytic mechanism. Beta-D-fructose 2,6-bisphosphate-binding residues include Y334, R348, K352, Y363, Q389, and R393. Y345–R348 lines the ATP pocket. Residues Q389–R393 and Y425 contribute to the ATP site. The interval K475 to R504 is disordered. The residue at position 490 (S490) is a Phosphoserine; by AMPK and PKA. At T492 the chain carries Phosphothreonine. S496 is modified (phosphoserine).

In the C-terminal section; belongs to the phosphoglycerate mutase family. Homodimer. Forms a heterodimer with PFKFB2. Post-translationally, phosphorylation by AMPK stimulates activity.

The catalysed reaction is beta-D-fructose 2,6-bisphosphate + H2O = beta-D-fructose 6-phosphate + phosphate. It carries out the reaction beta-D-fructose 6-phosphate + ATP = beta-D-fructose 2,6-bisphosphate + ADP + H(+). Catalyzes both the synthesis and degradation of fructose 2,6-bisphosphate. The chain is 6-phosphofructo-2-kinase/fructose-2,6-bisphosphatase 3 (Pfkfb3) from Rattus norvegicus (Rat).